We begin with the raw amino-acid sequence, 343 residues long: Zinc finger protein STP3 (343 aa).

Disordered stretches follow at residues 31-56 (YNGEASSASTHPTLPNMNISNGSGSA) and 71-140 (SNDV…KPRK). Polar residues predominate over residues 33–45 (GEASSASTHPTLP). Low complexity-rich tracts occupy residues 46–56 (NMNISNGSGSA), 71–86 (SNDVSRSNSSSSFLPS), and 94–120 (SASASETSSSASPSRSISPILKVAGPS). Phosphoserine occurs at positions 71 and 111. A C2H2-type zinc finger spans residues 169-191 (HKCPICHRGFARNNDLLRHKKRH). The segment at 198-222 (SQSGVLSNHNDGKGGSVSPNDDDTH) is disordered.

It localises to the nucleus. This Saccharomyces cerevisiae (strain ATCC 204508 / S288c) (Baker's yeast) protein is Zinc finger protein STP3 (STP3).